The primary structure comprises 146 residues: Snaclec agkicetin-C subunit beta (146 aa).

The signal sequence occupies residues 1–23 (MGRFIFVSFGLLVVFLSLSGTGA). 3 cysteine pairs are disulfide-bonded: Cys25/Cys36, Cys53/Cys142, and Cys119/Cys134. The region spanning 32 to 143 (YEGNCYLVVK…CSRTQPFVCK (112 aa)) is the C-type lectin domain.

This sequence belongs to the snaclec family. As to quaternary structure, heterodimer of subunits alpha and beta; disulfide-linked. As to expression, expressed by the venom gland.

It localises to the secreted. In terms of biological role, is a potent glycoprotein Ibalpha (GP1BA) antagonist. Concentration-dependently inhibits botrocetin-, ristocetin- and low dose thrombin-induced platelet aggregation. Inhibits platelet adhesion only through inhibiting the vWF interaction with GP1BA, but has minimal effect on other platelet receptors, such as alpha-IIb/beta-3 (ITGA2B/ITGB3) or alpha-2/beta-1 (ITGA2/ITGB1). Causes an instant severe thrombocytopenia in rats and is not lethal to mice. The polypeptide is Snaclec agkicetin-C subunit beta (Deinagkistrodon acutus (Hundred-pace snake)).